The chain runs to 485 residues: CUGBP Elav-like family member 5 (485 aa).

Residues 1–11 show a composition bias toward basic and acidic residues; sequence MARLTESEARR. The interval 1-40 is disordered; sequence MARLTESEARRQQQQLLQPRPSPVGSSGPEPPGGQPDGMK. The span at 12 to 28 shows a compositional bias: low complexity; that stretch reads QQQQLLQPRPSPVGSSG. RRM domains follow at residues 45 to 126, 134 to 214, and 400 to 478; these read IKLF…PADS, RKLF…FADT, and CNLF…LKRP.

It belongs to the CELF/BRUNOL family. As to expression, expressed in brain.

The protein resides in the nucleus. Its subcellular location is the cytoplasm. Its function is as follows. RNA-binding protein implicated in the regulation of pre-mRNA alternative splicing. Mediates exon inclusion and/or exclusion in pre-mRNA that are subject to tissue-specific and developmentally regulated alternative splicing. Specifically activates exon 5 inclusion of cardiac isoforms of TNNT2 during heart remodeling at the juvenile to adult transition. Binds to muscle-specific splicing enhancer (MSE) intronic sites flanking the alternative exon 5 of TNNT2 pre-mRNA. The sequence is that of CUGBP Elav-like family member 5 (CELF5) from Homo sapiens (Human).